The sequence spans 288 residues: Peptidyl-tRNA hydrolase, chloroplastic (288 aa).

Residues 1 to 55 (MKAVAFPAKIANLSFPSNCCSLFFRSPATFLSPALPCRKLTKGIRGLEGLMSQCL) constitute a chloroplast transit peptide. Tyr107 provides a ligand contact to tRNA. The Proton acceptor role is filled by His112. TRNA is bound by residues Phe157, Asn159, and Asn205.

The protein belongs to the PTH family. Monomer.

The protein localises to the plastid. It localises to the chloroplast stroma. The enzyme catalyses an N-acyl-L-alpha-aminoacyl-tRNA + H2O = an N-acyl-L-amino acid + a tRNA + H(+). In terms of biological role, the natural substrate for this enzyme may be peptidyl-tRNAs which drop off the ribosome during protein synthesis. The protein is Peptidyl-tRNA hydrolase, chloroplastic of Arabidopsis thaliana (Mouse-ear cress).